We begin with the raw amino-acid sequence, 211 residues long: Thymidylate kinase (211 aa).

11–18 (GPDGAGKT) is a binding site for ATP.

Belongs to the thymidylate kinase family.

It carries out the reaction dTMP + ATP = dTDP + ADP. Its function is as follows. Phosphorylation of dTMP to form dTDP in both de novo and salvage pathways of dTTP synthesis. The protein is Thymidylate kinase of Streptococcus agalactiae serotype Ia (strain ATCC 27591 / A909 / CDC SS700).